The following is a 114-amino-acid chain: RutC family protein YoaB (114 aa).

Belongs to the RutC family.

In Escherichia coli O6:H1 (strain CFT073 / ATCC 700928 / UPEC), this protein is RutC family protein YoaB (yoaB).